Consider the following 457-residue polypeptide: Putative ankyrin repeat protein L112 (457 aa).

11 ANK repeats span residues 62-91 (QRIT…NHNP), 104-132 (SKDT…ASIN), 133-162 (SSSL…EIIN), 193-219 (YINE…LDCS), 220-249 (ITVD…DPRK), 251-279 (KCWA…KPKE), 281-309 (NVDA…DTIT), 310-339 (RRDW…SQKS), 341-368 (NKAL…DFRQ), 400-429 (NNNE…DYNP), and 431-457 (KDQL…DTLK).

In Acanthamoeba polyphaga mimivirus (APMV), this protein is Putative ankyrin repeat protein L112.